The primary structure comprises 533 residues: Sterol 26-hydroxylase, mitochondrial (533 aa).

A mitochondrion-targeting transit peptide spans 1–32 (MAAWSRTRLRWTLLDPRVVGRGLCPQGARAKA). A disordered region spans residues 34-60 (IPAALQAQESTEGPGTGQDRPRLRSPA). N6-acetyllysine is present on residues Lys-142, Lys-232, Lys-285, Lys-296, and Lys-375. The tract at residues 386–400 (PLLKAVIKETLRLYP) is sterol-binding. Cys-479 provides a ligand contact to heme. 2 positions are modified to N6-acetyllysine: Lys-512 and Lys-523.

Belongs to the cytochrome P450 family. In terms of assembly, interacts with HSP70; this interaction is required for initial targeting to mitochondria. Heme serves as cofactor. Acetylation of Lys-125 and Lys-285 is observed in liver mitochondria from fasted mice but not from fed mice. Expressed in the gray and white matter of cerebellum (at protein level).

It is found in the mitochondrion inner membrane. It carries out the reaction 5beta-cholestane-3alpha,7alpha,12alpha-triol + 6 reduced [adrenodoxin] + 3 O2 + 5 H(+) = (25R)-3alpha,7alpha,12alpha-trihydroxy-5beta-cholestan-26-oate + 6 oxidized [adrenodoxin] + 4 H2O. The catalysed reaction is cholestanol + 2 reduced [adrenodoxin] + O2 + 2 H(+) = (25R)-26-hydroxycholestanol + 2 oxidized [adrenodoxin] + H2O. The enzyme catalyses (25R)-3beta-hydroxycholest-5-en-7-one-26-al + 2 reduced [adrenodoxin] + O2 + H(+) = (25R)-3beta-hydroxycholest-5-en-7-one-26-oate + 2 oxidized [adrenodoxin] + H2O. It catalyses the reaction (25R)-3beta,26-dihydroxycholest-5-en-7-one + 2 reduced [adrenodoxin] + O2 + 2 H(+) = (25R)-3beta-hydroxycholest-5-en-7-one-26-al + 2 oxidized [adrenodoxin] + 2 H2O. It carries out the reaction 7-oxocholesterol + 2 reduced [adrenodoxin] + O2 + 2 H(+) = (25R)-3beta,26-dihydroxycholest-5-en-7-one + 2 oxidized [adrenodoxin] + H2O. The catalysed reaction is calciol + 2 reduced [adrenodoxin] + O2 + 2 H(+) = calcidiol + 2 oxidized [adrenodoxin] + H2O. The enzyme catalyses (25R)-5beta-cholestane-3alpha,7alpha,12alpha,26-tetrol + 2 reduced [adrenodoxin] + O2 + 2 H(+) = (25R)-3alpha,7alpha,12alpha-trihydroxy-5beta-cholestan-26-al + 2 oxidized [adrenodoxin] + 2 H2O. It catalyses the reaction 2 reduced [adrenodoxin] + cholesterol + O2 + 2 H(+) = (25R)-cholest-5-ene-3beta,26-diol + 2 oxidized [adrenodoxin] + H2O. It carries out the reaction (25R)-3beta,4beta-dihydroxycholest-5-en-26-al + 2 reduced [adrenodoxin] + O2 + H(+) = (25R)-3beta,4beta-dihydroxycholest-5-en-26-oate + 2 oxidized [adrenodoxin] + H2O. The catalysed reaction is (25R)-4beta,26-dihydroxycholesterol + 2 reduced [adrenodoxin] + O2 + 2 H(+) = (25R)-3beta,4beta-dihydroxycholest-5-en-26-al + 2 oxidized [adrenodoxin] + 2 H2O. The enzyme catalyses 4beta-hydroxycholesterol + 2 reduced [adrenodoxin] + O2 + 2 H(+) = (25R)-4beta,26-dihydroxycholesterol + 2 oxidized [adrenodoxin] + H2O. It catalyses the reaction (25R)-3beta-hydroxy-5-cholesten-26-al + 2 reduced [adrenodoxin] + O2 + H(+) = (25R)-3beta-hydroxy-5-cholestenoate + 2 oxidized [adrenodoxin] + H2O. It carries out the reaction (25R)-cholest-5-ene-3beta,26-diol + 2 reduced [adrenodoxin] + O2 + 2 H(+) = (25R)-3beta-hydroxy-5-cholesten-26-al + 2 oxidized [adrenodoxin] + 2 H2O. The catalysed reaction is (25R)-3alpha,7alpha,12alpha-trihydroxy-5beta-cholestan-26-al + 2 reduced [adrenodoxin] + O2 + H(+) = (25R)-3alpha,7alpha,12alpha-trihydroxy-5beta-cholestan-26-oate + 2 oxidized [adrenodoxin] + H2O. The enzyme catalyses 5beta-cholestane-3alpha,7alpha,12alpha-triol + 2 reduced [adrenodoxin] + O2 + 2 H(+) = (25R)-5beta-cholestane-3alpha,7alpha,12alpha,26-tetrol + 2 oxidized [adrenodoxin] + H2O. It functions in the pathway hormone biosynthesis; cholecalciferol biosynthesis. It participates in steroid metabolism; cholesterol degradation. The protein operates within lipid metabolism; bile acid biosynthesis. Cytochrome P450 monooxygenase that catalyzes regio- and stereospecific hydroxylation of cholesterol and its derivatives. Hydroxylates (with R stereochemistry) the terminal methyl group of cholesterol side-chain in a three step reaction to yield at first a C26 alcohol, then a C26 aldehyde and finally a C26 acid. Regulates cholesterol homeostasis by catalyzing the conversion of excess cholesterol to bile acids via both the 'neutral' (classic) and the 'acid' (alternative) pathways. May also regulate cholesterol homeostasis via generation of active oxysterols, which act as ligands for NR1H2 and NR1H3 nuclear receptors, modulating the transcription of genes involved in lipid metabolism. Plays a role in cholestanol metabolism in the cerebellum. Similarly to cholesterol, hydroxylates cholestanol and may facilitate sterol diffusion through the blood-brain barrier to the systemic circulation for further degradation. Also hydroxylates retinal 7-ketocholesterol, a noxious oxysterol with pro-inflammatory and pro-apoptotic effects, and may play a role in its elimination from the retinal pigment epithelium. May play a redundant role in vitamin D biosynthesis. Catalyzes 25-hydroxylation of vitamin D3 that is required for its conversion to a functionally active form. The protein is Sterol 26-hydroxylase, mitochondrial of Mus musculus (Mouse).